A 231-amino-acid chain; its full sequence is 7-cyano-7-deazaguanine synthase (231 aa).

8 to 18 (FSGGQDSTTCL) provides a ligand contact to ATP. Positions 188, 197, 200, and 203 each coordinate Zn(2+).

Belongs to the QueC family. Zn(2+) serves as cofactor.

It catalyses the reaction 7-carboxy-7-deazaguanine + NH4(+) + ATP = 7-cyano-7-deazaguanine + ADP + phosphate + H2O + H(+). The protein operates within purine metabolism; 7-cyano-7-deazaguanine biosynthesis. Its function is as follows. Catalyzes the ATP-dependent conversion of 7-carboxy-7-deazaguanine (CDG) to 7-cyano-7-deazaguanine (preQ(0)). This chain is 7-cyano-7-deazaguanine synthase, found in Escherichia coli (strain SMS-3-5 / SECEC).